We begin with the raw amino-acid sequence, 201 residues long: Recombination protein RecR (201 aa).

Residues Cys-57 to Cys-72 form a C4-type zinc finger. Residues Gly-81–Pro-176 enclose the Toprim domain.

This sequence belongs to the RecR family.

In terms of biological role, may play a role in DNA repair. It seems to be involved in an RecBC-independent recombinational process of DNA repair. It may act with RecF and RecO. This is Recombination protein RecR from Serratia proteamaculans (strain 568).